The chain runs to 345 residues: Meiotically up-regulated gene 97 protein (345 aa).

A run of 2 helical transmembrane segments spans residues 292-312 (MWVL…GLWM) and 319-329 (FAHGMLLNLGI).

Its subcellular location is the membrane. In terms of biological role, required for correct meiotic chromosome segregation. Appears to also have role in sporulation. The chain is Meiotically up-regulated gene 97 protein (mug97) from Schizosaccharomyces pombe (strain 972 / ATCC 24843) (Fission yeast).